Reading from the N-terminus, the 35-residue chain is MFDTNATRLPIWGIGCNPWTAEHVDQTLASGNDIC.

The propeptide occupies 1–10; that stretch reads MFDTNATRLP. I11 is subject to (3R,4R)-4,5-dihydroxyisoleucine; in form alpha-amanitin. I11 is subject to (3R,4S)-4-hydroxyisoleucine; in form gamma-amanitin. The segment at residues 11–18 is a cross-link (cyclopeptide (Ile-Pro)); the sequence is IWGIGCNP. The 2'-cysteinyl-6'-hydroxytryptophan sulfoxide (Trp-Cys) cross-link spans 12–16; it reads WGIGC. P18 is subject to 4-hydroxyproline. A propeptide spanning residues 19–35 is cleaved from the precursor; sequence WTAEHVDQTLASGNDIC.

The protein belongs to the MSDIN fungal toxin family. Post-translationally, processed by the macrocyclase-peptidase enzyme POPB to yield a toxic bicyclic octapeptide. POPB first removes 10 residues from the N-terminus. Conformational trapping of the remaining peptide forces the enzyme to release this intermediate rather than proceed to macrocyclization. The enzyme rebinds the remaining peptide in a different conformation and catalyzes macrocyclization of the N-terminal 8 residues.

In terms of biological role, major toxin belonging to the bicyclic octapeptides amatoxins that acts by binding non-competitively to RNA polymerase II and greatly slowing the elongation of transcripts from target promoters. This is Alpha-amanitin proprotein 1 from Galerina marginata (strain CBS 339.88).